The sequence spans 552 residues: MLHITEKEQTRGLRQLEKRGKRLLPPLIKFIWFCLISAACVAATTFYWLRLSPVHNIHKHSLNSSFEDKGEDGTLQLKHIFHHGVGEKDYKIHKRLDVTQEYLIKHSAYFQNMVNEQQQEVQEIQEIHKRHEKQEIQVKYGPDQEYNQTNTALNSVGTEYKSRLSTNEYDWPDVHRGKNPFDIQLPFKNKQSIARRIKHRNEPFFIESYLDYARSVNGDALILNRINLEWIDDDINIPNITDKDTIVTLATISSNAYVRFPQNDDDKKKSDWTDVGGGWIPDEENNDVNFGWEDVGLRGHIFVSKDNKTVVIGIKGTSGAGLPGGGSDETTKNDKTNDNLLFSCCCARVGYMWTTVCDCYEKAYTCNQDCLEKELRRKDRYYEAALDIYKNVTAIYPPETTDIWVTGHSLGGALASLLGRTYGLPTVAYEAPGEMLALKRLHLPQAPGLPRHLEHIWHIGNTADPIYMGVCNGASSSCSLGGYAMETACHTGYQCVYDVVTDYGWRVNLLNHRIHTVIDDIILVYNETAPCVYQAPCRDCFNWRFVSHDDKE.

The Cytoplasmic segment spans residues 1–26 (MLHITEKEQTRGLRQLEKRGKRLLPP). A helical; Signal-anchor for type II membrane protein transmembrane segment spans residues 27-49 (LIKFIWFCLISAACVAATTFYWL). The Lumenal portion of the chain corresponds to 50 to 552 (RLSPVHNIHK…WRFVSHDDKE (503 aa)). 5 N-linked (GlcNAc...) asparagine glycosylation sites follow: Asn63, Asn147, Asn239, Asn307, and Asn391. Ser409 (charge relay system) is an active-site residue. A glycan (N-linked (GlcNAc...) asparagine) is linked at Asn526.

Belongs to the AB hydrolase superfamily. Lipase family. Binds to both phosphatidylinositol (PI) and phosphatidylinositol 3,5-bisphosphate (PIP2).

Its subcellular location is the endosome. The protein localises to the multivesicular body membrane. It is found in the prevacuolar compartment membrane. It catalyses the reaction a triacylglycerol + H2O = a diacylglycerol + a fatty acid + H(+). Lipase which is essential for lysis of subvacuolar cytoplasm to vacuole targeted bodies and intravacuolar autophagic bodies. Involved in the lysis of intravacuolar multivesicular body (MVB) vesicles. The intravacuolar membrane disintegration by ATG15 is critical to life span extension. In Lodderomyces elongisporus (strain ATCC 11503 / CBS 2605 / JCM 1781 / NBRC 1676 / NRRL YB-4239) (Yeast), this protein is Putative lipase ATG15 (ATG15).